Consider the following 292-residue polypeptide: Non-homologous end joining protein Ku (292 aa).

The Ku domain occupies 12–196 (KLSLVTCPVV…KITKDMVELA (185 aa)). A disordered region spans residues 231–292 (KPIKLPEPEE…RSAARQRKAG (62 aa)). A compositionally biased stretch (basic residues) spans 271–292 (APAHRRPAKKAHRSAARQRKAG).

This sequence belongs to the prokaryotic Ku family. Homodimer. Interacts with LigD.

Its function is as follows. With LigD forms a non-homologous end joining (NHEJ) DNA repair enzyme, which repairs dsDNA breaks with reduced fidelity. Binds linear dsDNA with 5'- and 3'- overhangs but not closed circular dsDNA nor ssDNA. Recruits and stimulates the ligase activity of LigD. This chain is Non-homologous end joining protein Ku, found in Bradyrhizobium sp. (strain ORS 278).